Here is a 604-residue protein sequence, read N- to C-terminus: Protein hemingway (604 aa).

Disordered stretches follow at residues 1–70 (MSGA…GNPH), 103–309 (NQLS…PTSQ), 359–387 (SDRRGDTESEMSSMTETTMTSARSLGGGI), and 544–585 (TIKA…IDLD). Acidic residues-rich tracts occupy residues 8 to 38 (SDEESYGEESFEEDSESEVEVEEEEIEYIEP), 135 to 183 (EDEA…DDAQ), 194 to 214 (DDSDEEEGTDVEVEQLEEDEP), and 288 to 300 (EEPEEPEQPEENQ). The span at 368–379 (EMSSMTETTMTS) shows a compositional bias: low complexity.

The protein belongs to the CFAP97 family. As to expression, detected in ciliated sensory neurons at all stages of development, and in adult testis.

The protein localises to the cell projection. Its subcellular location is the cilium. It is found in the perikaryon. The protein resides in the cytoplasm. Its function is as follows. Involved in assembly and/or maintenance of motile cilia. Required during spermatogenesis for axoneme elongation. Necessary for optimal function of the chordotonal (hearing) organs. This chain is Protein hemingway, found in Drosophila melanogaster (Fruit fly).